The following is a 186-amino-acid chain: Putative thiamine-phosphate synthase 2 (186 aa).

4-amino-2-methyl-5-(diphosphooxymethyl)pyrimidine contacts are provided by residues 35-39 (QLREK) and asparagine 67. A Mg(2+)-binding site is contributed by glutamate 68. Residue serine 105 coordinates 4-amino-2-methyl-5-(diphosphooxymethyl)pyrimidine. Residue 131–133 (TSS) participates in 2-[(2R,5Z)-2-carboxy-4-methylthiazol-5(2H)-ylidene]ethyl phosphate binding. Histidine 134 contacts 4-amino-2-methyl-5-(diphosphooxymethyl)pyrimidine. 2-[(2R,5Z)-2-carboxy-4-methylthiazol-5(2H)-ylidene]ethyl phosphate-binding positions include glycine 161 and 181 to 182 (IS).

This sequence belongs to the thiamine-phosphate synthase family. Requires Mg(2+) as cofactor.

The catalysed reaction is 2-[(2R,5Z)-2-carboxy-4-methylthiazol-5(2H)-ylidene]ethyl phosphate + 4-amino-2-methyl-5-(diphosphooxymethyl)pyrimidine + 2 H(+) = thiamine phosphate + CO2 + diphosphate. It catalyses the reaction 2-(2-carboxy-4-methylthiazol-5-yl)ethyl phosphate + 4-amino-2-methyl-5-(diphosphooxymethyl)pyrimidine + 2 H(+) = thiamine phosphate + CO2 + diphosphate. It carries out the reaction 4-methyl-5-(2-phosphooxyethyl)-thiazole + 4-amino-2-methyl-5-(diphosphooxymethyl)pyrimidine + H(+) = thiamine phosphate + diphosphate. Its pathway is cofactor biosynthesis; thiamine diphosphate biosynthesis; thiamine phosphate from 4-amino-2-methyl-5-diphosphomethylpyrimidine and 4-methyl-5-(2-phosphoethyl)-thiazole: step 1/1. Functionally, condenses 4-methyl-5-(beta-hydroxyethyl)thiazole monophosphate (THZ-P) and 2-methyl-4-amino-5-hydroxymethyl pyrimidine pyrophosphate (HMP-PP) to form thiamine monophosphate (TMP). The polypeptide is Putative thiamine-phosphate synthase 2 (thiE2) (Aquifex aeolicus (strain VF5)).